The chain runs to 370 residues: 3-isopropylmalate dehydrogenase (370 aa).

Residue 77–90 (GPKWDSVPYEVRPE) coordinates NAD(+). 4 residues coordinate substrate: R97, R107, R135, and D226. The Mg(2+) site is built by D226, D250, and D254. Position 290–302 (290–302 (GSAPDIAGKGIAN)) interacts with NAD(+).

The protein belongs to the isocitrate and isopropylmalate dehydrogenases family. LeuB type 1 subfamily. In terms of assembly, homodimer. It depends on Mg(2+) as a cofactor. Mn(2+) serves as cofactor.

Its subcellular location is the cytoplasm. It carries out the reaction (2R,3S)-3-isopropylmalate + NAD(+) = 4-methyl-2-oxopentanoate + CO2 + NADH. It participates in amino-acid biosynthesis; L-leucine biosynthesis; L-leucine from 3-methyl-2-oxobutanoate: step 3/4. In terms of biological role, catalyzes the oxidation of 3-carboxy-2-hydroxy-4-methylpentanoate (3-isopropylmalate) to 3-carboxy-4-methyl-2-oxopentanoate. The product decarboxylates to 4-methyl-2 oxopentanoate. The protein is 3-isopropylmalate dehydrogenase of Brucella melitensis biotype 1 (strain ATCC 23456 / CCUG 17765 / NCTC 10094 / 16M).